We begin with the raw amino-acid sequence, 1681 residues long: MEGNETANLCSKSVGWLQKQDKDVEPWLWKLSNCFSTLTQSLPSAGGNPKDYMEHPKPKVELKDVPPPPPPVKPCKNIFPTVPLPKIQPPALPAVQHQTGPKVSCCVLCSNSTSCAPEIRCSGGGYIHPNTILDTGTVTCQVAPGLSFAPESPFKKASSTSTFVPRSAGFSNLCLENRLSPCQCHSQPAPCYSKVHLNPFHGDHPRFQVPALGTSPSYFTSGLSQHVENHLAQSEYLSHYCTSSLHFNTPSSAFLKGPHFCNVCFEKPSSSKVTDSHKIWPNIPPPNTSSAPIPICNGCGTQETVKEAALILAKNLCKASQKYGSPDLATGQMQENLPPIGVFWDIENCSVPSGRSAVTVVKRIRERLFKGHREAEFICVCDISKENKEVIEELNNCQVTVAHINATAKNAADDKLRQSLRRFADTHTSPATVVLVSTDVNFALELSDLRHRHSFHIILIHKNQASEALLHHAHELIHFEEFISDLPPRLPIKMQQCQTLLYVYNLPTNRDAKSISNRLRRLSDNCGGKVMSISGTSAILRFANQESAERAQKRMENEDVFGNRITVSFTPRNKEVNETKNSCVSNEKAKSPKKVNKNTKLCLSIKDDSSSNTKAASKSACGSVSKNSNVKSLKELCQMQSKSNKTSQQEKDKKRNGDKQGTLSQSSPLCTNQMLQTARNVGTDNTASKSFQKRDDTTRKSNADSQKEQKNKEDVVFQISNPSAFSKLTESRQASPFCSSQSGWSSRSLSPSLSNCSSPIATNQTGAADNSVDPFANGADIQIGNLDYRMSRKELQQTLHDIFSRHGKIKNVELSPHTDYQLKATVQMENLQEAICAVNSLHRYKIGSKRIQVSLATGATNKSLSLLSFGTVSILQDAPACCLPLFKFTEIYEKKFGHKLIVSDLYRLTDTVTIRDQGNGRLVCLLPSVQARQSPMGSSQSHDGSSANCSPVVFEELEYHEPICRRHCSNRKFSGHDFDPDSYIIPFVIISLKTFAPQVHSLLQTHEGTVPLLSFPDCYAAEFSALKEVQEGQGGVPLEHLITCIPGVNIAFAQNGIKVVKWIHNKPPPPNSDPWLLRSKSPVGNPQLIQFSREVIDLLKNQPSCIMPVTKFIPTYHHHFAKQCRVSDYGYSKLLELLEAVPHVLQILGMGSKRLLTLTHRAQVKRFTQDLLKLLKSQASKQVIVREFSQAYHWCFSRDWNVTEYGVCDLVDIVSEIPDTTICVSQQDGESVISIPKRERTPEEVERTKQFSKEVVDLLRHQPHFRMPFNKFIPSYHHHFGRQCKLTYYGFTKLLDLFEAIPDVLQVLECGEEKILALTEMERIKALASQLVKLLRSQKDSSINMPDLLTEYSKTFGYSLRLHDYDVSSVPALMQKLCHVVKIMDTDLGKQIQLINRKSLRSLTAQLLILLMSWDESSSLTVEQLCQVYQSVHGIPLNPCEYGFVSLAELLKSLPYLVEVHTNDLCEDSVQLTSLYVFAKNVRSLLHTYHYQQIFLHEFPNAYSKYVGEVLQPKQYGYSSLEEILGAIPQVVWIKGHGHKRIVVLKNDMKVCHQMDKELLCLTSPMDLLCGPVPSCLPSPQLHPDPVVTQPADLIQFEEHFHFSDLVYPEETQYNPLCNGTQPCNFPTSADLDTFSEPSTQNICPQESKSTKELPESPVKRQHRNRVKLAANFSFAPVTKL.

One can recognise an NYN domain in the interval 340–477; that stretch reads IGVFWDIENC…ALLHHAHELI (138 aa). Disordered stretches follow at residues 576–595 and 638–717; these read VNET…PKKV and QMQS…DVVF. Residues 638-647 show a composition bias toward polar residues; sequence QMQSKSNKTS. Positions 648-658 are enriched in basic and acidic residues; sequence QQEKDKKRNGD. Polar residues predominate over residues 659–690; the sequence is KQGTLSQSSPLCTNQMLQTARNVGTDNTASKS. Basic and acidic residues predominate over residues 692–715; the sequence is QKRDDTTRKSNADSQKEQKNKEDV. An RRM domain is found at 779–858; it reads ADIQIGNLDY…KRIQVSLATG (80 aa). HTH OST-type domains lie at 863–937, 991–1067, 1087–1161, 1163–1238, 1247–1321, 1323–1398, 1399–1472, and 1474–1548; these read SLSL…SPMG, SLKT…HNKP, QLIQ…LTHR, QVKR…IPKR, RTKQ…LTEM, RIKA…INRK, SLRS…SVQL, and SLYV…LKND. Polar residues predominate over residues 1637 to 1648; sequence EPSTQNICPQES. Residues 1637–1662 form a disordered region; the sequence is EPSTQNICPQESKSTKELPESPVKRQ. Residues 1649–1659 are compositionally biased toward basic and acidic residues; the sequence is KSTKELPESPV.

Its subcellular location is the peroxisome. Essential regulator of oogenesis required for female meiotic progression to repress transposable elements and preventing their mobilization, which is essential for the germline integrity. In Xenopus tropicalis (Western clawed frog), this protein is Meiosis regulator and mRNA stability factor 1.